A 333-amino-acid chain; its full sequence is Fructose-1,6-bisphosphatase class 1 (333 aa).

Mg(2+) contacts are provided by Glu-92, Asp-113, Leu-115, and Asp-116. Residues 116 to 119 (DGSS), Asn-209, Tyr-242, and Lys-272 each bind substrate. A Mg(2+)-binding site is contributed by Glu-278.

The protein belongs to the FBPase class 1 family. In terms of assembly, homotetramer. Requires Mg(2+) as cofactor.

It is found in the cytoplasm. It catalyses the reaction beta-D-fructose 1,6-bisphosphate + H2O = beta-D-fructose 6-phosphate + phosphate. The protein operates within carbohydrate biosynthesis; Calvin cycle. This is Fructose-1,6-bisphosphatase class 1 from Pelodictyon phaeoclathratiforme (strain DSM 5477 / BU-1).